The chain runs to 393 residues: Tryptophan 2,3-dioxygenase (393 aa).

Residues 56 to 60 (FIVTH) and R127 contribute to the substrate site. H312 is a binding site for heme. T327 contacts substrate.

Belongs to the tryptophan 2,3-dioxygenase family. Homotetramer. Dimer of dimers. The cofactor is heme.

The catalysed reaction is L-tryptophan + O2 = N-formyl-L-kynurenine. Its pathway is amino-acid degradation; L-tryptophan degradation via kynurenine pathway; L-kynurenine from L-tryptophan: step 1/2. It functions in the pathway pigment biosynthesis; ommochrome biosynthesis. With respect to regulation, stimulated by low concentrations of hydrogen peroxide (5 uM), ascorbate (0.1-0.3 mM), and sodium hydrosulfite (0.1 mM). Inhibited by high concentrations of hydrogen peroxide (0.1 mM), ascorbate (10 mM), and sodium hydrosulfite (1 mM). Heme-dependent dioxygenase that catalyzes the oxidative cleavage of the L-tryptophan (L-Trp) pyrrole ring and converts L-tryptophan to N-formyl-L-kynurenine. Catalyzes the oxidative cleavage of the indole moiety. The sequence is that of Tryptophan 2,3-dioxygenase from Aedes aegypti (Yellowfever mosquito).